The chain runs to 98 residues: Large ribosomal subunit protein eL21 (98 aa).

This sequence belongs to the eukaryotic ribosomal protein eL21 family.

The polypeptide is Large ribosomal subunit protein eL21 (Korarchaeum cryptofilum (strain OPF8)).